The following is a 256-amino-acid chain: Necrosis-inducing protein NPP1 (256 aa).

The short motif at 111 to 121 (AIMYAWYFPKG) is the Conserved undecapeptide motif element. The Conserved heptapeptide motif motif lies at 133–139 (GHRHEWE).

The protein belongs to the Necrosis inducing protein (NPP1) family.

Its subcellular location is the secreted. Functionally, secreted effector that acts as a pathogen-associated molecular pattern (PAMP) recognized by the plant immune system. The protein is Necrosis-inducing protein NPP1 of Phytophthora cinnamomi (Cinnamon fungus).